Reading from the N-terminus, the 301-residue chain is NADH-cytochrome b5 reductase 3 (301 aa).

A lipid anchor (N-myristoyl glycine) is attached at glycine 2. Positions 40 to 152 constitute an FAD-binding FR-type domain; the sequence is DIKYPLRLID…RGPSGLLVYQ (113 aa). Lysine 42 is modified (N6-acetyllysine). Tyrosine 43 bears the Phosphotyrosine mark. FAD is bound by residues arginine 92, proline 93, tyrosine 94, valine 109, lysine 111, and phenylalanine 114. Lysine 120 carries the post-translational modification N6-acetyllysine. FAD-binding residues include lysine 126, methionine 127, serine 128, and threonine 185.

Belongs to the flavoprotein pyridine nucleotide cytochrome reductase family. Component of a complex composed of cytochrome b5, NADH-cytochrome b5 reductase (CYB5R3) and MTARC2. Interacts with MTLN; the interaction is required to maintain cellular lipid composition and leads to stimulation of mitochondrial respiratory complex I activity. FAD is required as a cofactor. Expressed at late stages of erythroid maturation.

It is found in the endoplasmic reticulum membrane. The protein localises to the mitochondrion outer membrane. Its subcellular location is the cytoplasm. The catalysed reaction is 2 Fe(III)-[cytochrome b5] + NADH = 2 Fe(II)-[cytochrome b5] + NAD(+) + H(+). Its function is as follows. Catalyzes the reduction of two molecules of cytochrome b5 using NADH as the electron donor. This chain is NADH-cytochrome b5 reductase 3, found in Homo sapiens (Human).